Consider the following 321-residue polypeptide: Lipoyl synthase (321 aa).

The [4Fe-4S] cluster site is built by C68, C73, C79, C94, C98, C101, and S308. Positions 80-297 constitute a Radical SAM core domain; the sequence is FNHGTATFMI…KEVALELGFT (218 aa).

This sequence belongs to the radical SAM superfamily. Lipoyl synthase family. It depends on [4Fe-4S] cluster as a cofactor.

The protein resides in the cytoplasm. It carries out the reaction [[Fe-S] cluster scaffold protein carrying a second [4Fe-4S](2+) cluster] + N(6)-octanoyl-L-lysyl-[protein] + 2 oxidized [2Fe-2S]-[ferredoxin] + 2 S-adenosyl-L-methionine + 4 H(+) = [[Fe-S] cluster scaffold protein] + N(6)-[(R)-dihydrolipoyl]-L-lysyl-[protein] + 4 Fe(3+) + 2 hydrogen sulfide + 2 5'-deoxyadenosine + 2 L-methionine + 2 reduced [2Fe-2S]-[ferredoxin]. The protein operates within protein modification; protein lipoylation via endogenous pathway; protein N(6)-(lipoyl)lysine from octanoyl-[acyl-carrier-protein]: step 2/2. In terms of biological role, catalyzes the radical-mediated insertion of two sulfur atoms into the C-6 and C-8 positions of the octanoyl moiety bound to the lipoyl domains of lipoate-dependent enzymes, thereby converting the octanoylated domains into lipoylated derivatives. In Vibrio parahaemolyticus serotype O3:K6 (strain RIMD 2210633), this protein is Lipoyl synthase.